We begin with the raw amino-acid sequence, 77 residues long: Apelin (77 aa).

The signal sequence occupies residues 1-22; it reads MNVKILTLVIVLVVSLLCSASA. Positions 21–77 are disordered; sequence SAGPMASTEHSKEIEEVGSMRTPLRQNPARAGRSQRPAGWRRRRPRPRLSHKGPMPF. The segment covering 59 to 71 has biased composition (basic residues); sequence GWRRRRPRPRLSH.

It belongs to the apelin family.

Its subcellular location is the secreted. It is found in the extracellular space. Its function is as follows. Peptide hormone that functions as endogenous ligand for the G-protein-coupled apelin receptor (aplnra and/or aplnrb), that plays a role in cadiovascular homeostasis. Functions as a balanced agonist activating both G(i) protein pathway and beta-arrestin pathway of APLNR. Downstream G proteins activation, apelin can inhibit cAMP production and activate key intracellular effectors such as ERKs. On the other hand, APLNR activation induces beta-arrestin recruitment to the membrane leading to desensitization and internalization of the receptor. Apelin blunts cardiac hypertrophic induction from APLNR on response to pathological stimuli, but also induces myocardial hypertrophy under normal conditions. Involved in the regulation of cardiac precursor cell movements during gastrulation and heart morphogenesis. Plays a role in early coronary blood vessels formation. Mediates myocardial contractility in an ERK1/2-dependent manner. May also have a role in the central control of body fluid homeostasis. The protein is Apelin of Danio rerio (Zebrafish).